An 870-amino-acid polypeptide reads, in one-letter code: Phenylalanine--tRNA ligase beta subunit (870 aa).

Positions 39-148 (AADLQKFEVA…EDAVVGEPFT (110 aa)) constitute a tRNA-binding domain. The B5 domain occupies 427 to 551 (PAKKTLDFPA…RIYGYDKIES (125 aa)). The 49-residue stretch at 450 to 498 (LLHNEANKGEFVGNTEHSIAAYKEVREDASTGLTPKLPLEASYVKGLNI) folds into the RPE1 insert domain. Residues D529, D535, E538, and E539 each contribute to the Mg(2+) site. In terms of domain architecture, FDX-ACB spans 776–869 (SDYQANFRDY…IEQKFQGTLR (94 aa)).

The protein belongs to the phenylalanyl-tRNA synthetase beta subunit family. Type 1 subfamily. As to quaternary structure, tetramer of two alpha and two beta subunits. Requires Mg(2+) as cofactor.

It localises to the cytoplasm. The enzyme catalyses tRNA(Phe) + L-phenylalanine + ATP = L-phenylalanyl-tRNA(Phe) + AMP + diphosphate + H(+). The polypeptide is Phenylalanine--tRNA ligase beta subunit (pheT) (Rickettsia bellii (strain RML369-C)).